Consider the following 203-residue polypeptide: MEKMAMKMLVIFVLGMNHWTCTGFPVYDYDPASLKEALSASVAKVNSQSLSPYLFRAFRSSVKRVNALDEDSLTMDLEFRIQETTCRRESEADPATCDFQRGYHVPVAVCRSTVRMSAEQVQNVWVRCHWSSSSGSSSSEEMFFGDILGSSTSRNSYLLGLTPDRSRGEPLYEPSREMRRNFPLGNRRYSNPWPRARVNPGFE.

The signal sequence occupies residues 1 to 23; sequence MEKMAMKMLVIFVLGMNHWTCTG. Disulfide bonds link Cys-86–Cys-97 and Cys-110–Cys-128. Ser-90 is subject to Phosphoserine. Ser-138, Ser-139, Ser-166, and Ser-175 each carry phosphoserine.

It belongs to the SPP2 family. In terms of processing, multiply phosphorylated at serine residues in Ser-X-Glu/Ser(P) sequences, a recognition motif for phosphorylation by secretory pathway protein kinase. Phosphorylation sites are present in the extracellular medium. In liver and bone but not in heart, lung, kidney, or spleen.

Its subcellular location is the secreted. Could coordinate an aspect of bone turnover. In Bos taurus (Bovine), this protein is Secreted phosphoprotein 24 (SPP2).